Reading from the N-terminus, the 1212-residue chain is uncharacterized protein (1212 aa).

Residues 1 to 31 (MASIQTKLVSQPQTQQPLQNGFFNNYQQNIY) are compositionally biased toward polar residues. 7 disordered regions span residues 1–70 (MASI…HLQQ), 119–169 (PQAQ…FGTN), 211–231 (SLNN…SNNN), 248–374 (INIG…NNNK), 655–681 (QQQP…TQQQ), 935–957 (NQNQ…CNNA), and 973–1125 (QLQP…QQLQ). 2 stretches are compositionally biased toward low complexity: residues 48-70 (PQQQ…HLQQ) and 119-163 (PQAQ…NNNN). Positions 256–275 (NNSNTNNVNNINTNNTNNNN) are enriched in low complexity. 2 stretches are compositionally biased toward polar residues: residues 276-285 (KSGSIDQFGS) and 292-317 (YVNS…SHSP). Positions 322-340 (INSNININSNLQSPQNIQQ) are enriched in low complexity. The span at 341-351 (TILSPNISPNH) shows a compositional bias: polar residues. Residues 352 to 373 (NNNNNNNNNNNNNNNNNNNNNN) show a composition bias toward low complexity. 2 stretches are compositionally biased toward low complexity: residues 998 to 1022 (NSVN…NNNN) and 1037 to 1125 (QNNN…QQLQ).

This is an uncharacterized protein from Dictyostelium discoideum (Social amoeba).